Reading from the N-terminus, the 182-residue chain is uncharacterized protein (182 aa).

2 consecutive transmembrane segments (helical) span residues 58–78 (ILFG…YVVY) and 81–101 (PVSI…IIIW).

The protein to M.jannaschii MJ0803.

The protein localises to the cell membrane. This is an uncharacterized protein from Methanocaldococcus jannaschii (strain ATCC 43067 / DSM 2661 / JAL-1 / JCM 10045 / NBRC 100440) (Methanococcus jannaschii).